The primary structure comprises 382 residues: Histidinol-phosphate aminotransferase (382 aa).

Lysine 215 bears the N6-(pyridoxal phosphate)lysine mark. A disordered region spans residues 363 to 382; sequence NIDNQSKTHSQTSSIRKGTI.

It belongs to the class-II pyridoxal-phosphate-dependent aminotransferase family. Histidinol-phosphate aminotransferase subfamily. Homodimer. Requires pyridoxal 5'-phosphate as cofactor.

It catalyses the reaction L-histidinol phosphate + 2-oxoglutarate = 3-(imidazol-4-yl)-2-oxopropyl phosphate + L-glutamate. It participates in amino-acid biosynthesis; L-histidine biosynthesis; L-histidine from 5-phospho-alpha-D-ribose 1-diphosphate: step 7/9. The protein is Histidinol-phosphate aminotransferase of Yersinia pseudotuberculosis serotype O:1b (strain IP 31758).